Consider the following 198-residue polypeptide: MIKDNIKLKLTIIGDWNVGKSSLLYRFFNDVFYEQTKLSMGEHFFYKTVLIRGESIDLQITDTSGMEKFRSLNNSFYSNLDGILIVYDISDQETFENTKLWLNEANKLAPKDCIKIIVASKFDLENKVVDSNIVKSYADNLNLKFFETSSKNSINVEETFITLVEDILLKKNYQFNNITKNKNNQDEDFNKKKGCSIN.

GTP is bound at residue glycine 14–serine 21. The Effector region motif lies at threonine 36–phenylalanine 44. GTP contacts are provided by residues aspartate 62–methionine 66 and serine 120–aspartate 123. The residue at position 195 (cysteine 195) is a Cysteine methyl ester. Cysteine 195 carries S-geranylgeranyl cysteine lipidation. A propeptide spans serine 196–asparagine 198 (removed in mature form).

It belongs to the small GTPase superfamily. Rab family.

Its subcellular location is the cell membrane. The protein is Ras-related protein RabH (rabH) of Dictyostelium discoideum (Social amoeba).